The primary structure comprises 244 residues: Ubiquinone/menaquinone biosynthesis C-methyltransferase UbiE (244 aa).

S-adenosyl-L-methionine-binding positions include Thr-70, Asp-91, and 117–118; that span reads DA.

The protein belongs to the class I-like SAM-binding methyltransferase superfamily. MenG/UbiE family.

It carries out the reaction a 2-demethylmenaquinol + S-adenosyl-L-methionine = a menaquinol + S-adenosyl-L-homocysteine + H(+). The enzyme catalyses a 2-methoxy-6-(all-trans-polyprenyl)benzene-1,4-diol + S-adenosyl-L-methionine = a 5-methoxy-2-methyl-3-(all-trans-polyprenyl)benzene-1,4-diol + S-adenosyl-L-homocysteine + H(+). Its pathway is quinol/quinone metabolism; menaquinone biosynthesis; menaquinol from 1,4-dihydroxy-2-naphthoate: step 2/2. The protein operates within cofactor biosynthesis; ubiquinone biosynthesis. Methyltransferase required for the conversion of demethylmenaquinol (DMKH2) to menaquinol (MKH2) and the conversion of 2-polyprenyl-6-methoxy-1,4-benzoquinol (DDMQH2) to 2-polyprenyl-3-methyl-6-methoxy-1,4-benzoquinol (DMQH2). The sequence is that of Ubiquinone/menaquinone biosynthesis C-methyltransferase UbiE from Nitrosospira multiformis (strain ATCC 25196 / NCIMB 11849 / C 71).